We begin with the raw amino-acid sequence, 106 residues long: Isocitrate dehydrogenase [NAD] subunit gamma, mitochondrial (106 aa).

Belongs to the isocitrate and isopropylmalate dehydrogenases family. Heterooligomer of subunits alpha (IDH3A), beta (IDH3B), and gamma (IDH3G) in the apparent ratio of 2:1:1. The heterodimer containing one IDH3A and one IDH3B subunit and the heterodimer containing one IDH3A and one IDH3G subunit assemble into a heterotetramer (which contains two subunits of IDH3A, one of IDH3B and one of IDH3G) and further into the heterooctamer.

It localises to the mitochondrion. Its activity is regulated as follows. The heterotetramer and the heterodimer composed of IDH3A and IDH3G subunits can be allosterically activated by citrate (CIT) or/and ADP, and the two activators can act independently or synergistically. The heterodimer composed of IDH3A and IDH3B subunits cannot be allosterically regulated and the allosteric regulation of the heterotetramer is through the IDH3G subunit and not the IDH3B subunit. The IDH3G subunit contains the allosteric site which consists of a CIT-binding site and an ADP-binding site, and the binding of CIT and ADP causes conformational changes at the allosteric site which are transmitted to the active site in the catalytic subunit (IDH3A) through a cascade of conformational changes at the heterodimer interface, leading to stabilization of the isocitrate-binding at the active site and thus activation of the enzyme. ATP can activate the heterotetramer and the heterodimer composed of IDH3A and IDH3G subunits at low concentrations but inhibits their activities at high concentrations, whereas ATP exhibits only inhibitory effect on the heterodimer composed of IDH3A and IDH3B subunits. Functionally, regulatory subunit which plays a role in the allosteric regulation of the enzyme catalyzing the decarboxylation of isocitrate (ICT) into alpha-ketoglutarate. The heterodimer composed of the alpha (IDH3A) and beta (IDH3B) subunits and the heterodimer composed of the alpha (IDH3A) and gamma (IDH3G) subunits, have considerable basal activity but the full activity of the heterotetramer (containing two subunits of IDH3A, one of IDH3B and one of IDH3G) requires the assembly and cooperative function of both heterodimers. This is Isocitrate dehydrogenase [NAD] subunit gamma, mitochondrial (IDH3G) from Sus scrofa (Pig).